The sequence spans 528 residues: UDP-glucuronosyltransferase 2B30 (528 aa).

An N-terminal signal peptide occupies residues 1–23; that stretch reads MSMKWTSALLLIQLSCYLSSGNC. Residue K135 is modified to N6-succinyllysine. Residue N315 is glycosylated (N-linked (GlcNAc...) asparagine). Residues 493-513 traverse the membrane as a helical segment; it reads VIGFLLACVATVIFIITKCLF.

The protein belongs to the UDP-glycosyltransferase family. In terms of tissue distribution, expressed in several tissues, including prostate, testis, mammary gland, kidney, adrenals and intestine.

It is found in the microsome membrane. The protein resides in the endoplasmic reticulum membrane. The enzyme catalyses glucuronate acceptor + UDP-alpha-D-glucuronate = acceptor beta-D-glucuronoside + UDP + H(+). In terms of biological role, UDPGTs are of major importance in the conjugation and subsequent elimination of potentially toxic xenobiotics and endogenous compounds. This isozyme has glucuronidating capacity on testosterone, dihydrotestosterone, 5-alpha-androstane-3-alpha,17-beta-diol, androsterone, oestradiol, tetrahydroaldosterone and tetrahydrocortisone. This enzyme is essential to inactivation of several steroids. This is UDP-glucuronosyltransferase 2B30 (UGT2B30) from Macaca fascicularis (Crab-eating macaque).